The sequence spans 1512 residues: Sterol 3-beta-glucosyltransferase (1512 aa).

2 disordered regions span residues 22–50 and 150–222; these read FSGS…YHSL and DEHT…DTDV. Residues 156–169 show a composition bias toward acidic residues; the sequence is SEEEDSADKEEESI. Positions 190-222 are enriched in low complexity; the sequence is TTATLITTQITRTKTATTATPTPTPTSSVDTDV. Residues 296–331 enclose the GRAM 1 domain; sequence LQRVFDLSDEDTFCGNYSAWLIKDVLLQGHVYLTKD. The PH domain occupies 359-520; it reads SIVYSGNLGL…WCNNITKLIF (162 aa). The 65-residue stretch at 816 to 880 folds into the GRAM 2 domain; the sequence is RNFQSHFSTN…TDIEEVRASR (65 aa). Positions 1024, 1025, 1027, 1299, 1328, 1330, 1343, 1346, 1347, 1348, 1367, and 1368 each coordinate UDP-alpha-D-glucose. The tract at residues 1450-1512 is disordered; sequence YKRHHPVPSG…NNSPSQNSSN (63 aa). Over residues 1467-1493 the composition is skewed to acidic residues; it reads TDSDDYDDDEDDDESDKDDEEEEEENS. Polar residues predominate over residues 1501-1512; that stretch reads GVNNSPSQNSSN.

Belongs to the glycosyltransferase 28 family.

It localises to the cytoplasm. The protein localises to the membrane. It carries out the reaction a sterol + UDP-alpha-D-glucose = a sterol 3-beta-D-glucoside + UDP + H(+). The catalysed reaction is ergosterol + UDP-alpha-D-glucose = ergosteryl 3-beta-D-glucoside + UDP + H(+). Its function is as follows. Sterol glycosyltransferase responsible for the glycosylation of ergosterol to form ergosterol-glucoside. This chain is Sterol 3-beta-glucosyltransferase, found in Candida albicans (strain SC5314 / ATCC MYA-2876) (Yeast).